Here is a 378-residue protein sequence, read N- to C-terminus: Succinyl-diaminopimelate desuccinylase (378 aa).

Residue histidine 68 coordinates Zn(2+). The active site involves aspartate 70. Aspartate 102 provides a ligand contact to Zn(2+). Glutamate 136 functions as the Proton acceptor in the catalytic mechanism. Zn(2+)-binding residues include glutamate 137, glutamate 165, and histidine 351.

It belongs to the peptidase M20A family. DapE subfamily. As to quaternary structure, homodimer. Zn(2+) is required as a cofactor. It depends on Co(2+) as a cofactor.

It carries out the reaction N-succinyl-(2S,6S)-2,6-diaminopimelate + H2O = (2S,6S)-2,6-diaminopimelate + succinate. It functions in the pathway amino-acid biosynthesis; L-lysine biosynthesis via DAP pathway; LL-2,6-diaminopimelate from (S)-tetrahydrodipicolinate (succinylase route): step 3/3. Its function is as follows. Catalyzes the hydrolysis of N-succinyl-L,L-diaminopimelic acid (SDAP), forming succinate and LL-2,6-diaminopimelate (DAP), an intermediate involved in the bacterial biosynthesis of lysine and meso-diaminopimelic acid, an essential component of bacterial cell walls. In Pseudomonas syringae pv. syringae, this protein is Succinyl-diaminopimelate desuccinylase.